We begin with the raw amino-acid sequence, 450 residues long: Chromosomal replication initiator protein DnaA (450 aa).

The segment at methionine 1 to isoleucine 73 is domain I, interacts with DnaA modulators. The tract at residues isoleucine 73–leucine 104 is domain II. Residues alanine 105 to alanine 326 form a domain III, AAA+ region region. Residues glycine 149, glycine 151, lysine 152, and threonine 153 each contribute to the ATP site. The segment at valine 327–arginine 450 is domain IV, binds dsDNA.

This sequence belongs to the DnaA family. As to quaternary structure, oligomerizes as a right-handed, spiral filament on DNA at oriC.

It localises to the cytoplasm. Functionally, plays an essential role in the initiation and regulation of chromosomal replication. ATP-DnaA binds to the origin of replication (oriC) to initiate formation of the DNA replication initiation complex once per cell cycle. Binds the DnaA box (a 9 base pair repeat at the origin) and separates the double-stranded (ds)DNA. Forms a right-handed helical filament on oriC DNA; dsDNA binds to the exterior of the filament while single-stranded (ss)DNA is stabiized in the filament's interior. The ATP-DnaA-oriC complex binds and stabilizes one strand of the AT-rich DNA unwinding element (DUE), permitting loading of DNA polymerase. After initiation quickly degrades to an ADP-DnaA complex that is not apt for DNA replication. Binds acidic phospholipids. The polypeptide is Chromosomal replication initiator protein DnaA (Spiroplasma citri).